The chain runs to 463 residues: L-seryl-tRNA(Sec) selenium transferase (463 aa).

N6-(pyridoxal phosphate)lysine is present on Lys-295.

It belongs to the SelA family. As to quaternary structure, homodecamer; pentamer of dimers. Binds only one seryl-tRNA(Sec) per dimer. Pyridoxal 5'-phosphate serves as cofactor.

The protein localises to the cytoplasm. The enzyme catalyses L-seryl-tRNA(Sec) + selenophosphate + H(+) = L-selenocysteinyl-tRNA(Sec) + phosphate. It participates in aminoacyl-tRNA biosynthesis; selenocysteinyl-tRNA(Sec) biosynthesis; selenocysteinyl-tRNA(Sec) from L-seryl-tRNA(Sec) (bacterial route): step 1/1. Converts seryl-tRNA(Sec) to selenocysteinyl-tRNA(Sec) required for selenoprotein biosynthesis. This is L-seryl-tRNA(Sec) selenium transferase from Shigella boydii serotype 4 (strain Sb227).